Here is a 633-residue protein sequence, read N- to C-terminus: DNA-directed RNA polymerase subunit gamma (633 aa).

The Zn(2+) site is built by Cys-74, Cys-76, Cys-89, and Cys-92. The Mg(2+) site is built by Asp-471, Asp-473, and Asp-475.

This sequence belongs to the RNA polymerase beta' chain family. RpoC1 subfamily. In terms of assembly, in cyanobacteria the RNAP catalytic core is composed of 2 alpha, 1 beta, 1 beta', 1 gamma and 1 omega subunit. When a sigma factor is associated with the core the holoenzyme is formed, which can initiate transcription. Requires Mg(2+) as cofactor. Zn(2+) is required as a cofactor.

It catalyses the reaction RNA(n) + a ribonucleoside 5'-triphosphate = RNA(n+1) + diphosphate. In terms of biological role, DNA-dependent RNA polymerase catalyzes the transcription of DNA into RNA using the four ribonucleoside triphosphates as substrates. The protein is DNA-directed RNA polymerase subunit gamma of Prochlorococcus marinus (strain MIT 9211).